Reading from the N-terminus, the 406-residue chain is Acetate kinase (406 aa).

Position 10 (Asn-10) interacts with Mg(2+). Lys-17 lines the ATP pocket. Arg-92 provides a ligand contact to substrate. Residue Asp-151 is the Proton donor/acceptor of the active site. ATP contacts are provided by residues 211–215 (HLGSG), 286–288 (DFR), and 335–339 (GIGEN). A Mg(2+)-binding site is contributed by Glu-389.

Belongs to the acetokinase family. Homodimer. It depends on Mg(2+) as a cofactor. Mn(2+) serves as cofactor.

It is found in the cytoplasm. The catalysed reaction is acetate + ATP = acetyl phosphate + ADP. The protein operates within metabolic intermediate biosynthesis; acetyl-CoA biosynthesis; acetyl-CoA from acetate: step 1/2. In terms of biological role, catalyzes the formation of acetyl phosphate from acetate and ATP. Can also catalyze the reverse reaction. In Buchnera aphidicola subsp. Cinara cedri (strain Cc), this protein is Acetate kinase.